Here is a 240-residue protein sequence, read N- to C-terminus: Ribonuclease PH (240 aa).

Phosphate contacts are provided by residues Arg87 and 125–127; that span reads GTR.

This sequence belongs to the RNase PH family. Homohexameric ring arranged as a trimer of dimers.

The enzyme catalyses tRNA(n+1) + phosphate = tRNA(n) + a ribonucleoside 5'-diphosphate. In terms of biological role, phosphorolytic 3'-5' exoribonuclease that plays an important role in tRNA 3'-end maturation. Removes nucleotide residues following the 3'-CCA terminus of tRNAs; can also add nucleotides to the ends of RNA molecules by using nucleoside diphosphates as substrates, but this may not be physiologically important. Probably plays a role in initiation of 16S rRNA degradation (leading to ribosome degradation) during starvation. In Pseudomonas fluorescens (strain ATCC BAA-477 / NRRL B-23932 / Pf-5), this protein is Ribonuclease PH.